The following is an 86-amino-acid chain: Large ribosomal subunit protein bL27 (86 aa).

The segment at 1–23 is disordered; sequence MAHKKGTGSTRNGRDSNSKRLGV.

The protein belongs to the bacterial ribosomal protein bL27 family.

This Prochlorococcus marinus (strain MIT 9515) protein is Large ribosomal subunit protein bL27.